Consider the following 289-residue polypeptide: Ubiquinone biosynthesis O-methyltransferase (289 aa).

An S-adenosyl-L-methionine-binding site is contributed by Arg-36. Residues 50–98 (RHLSKLTYREELVGNMQHSTAAYALVREDASSRLTHKLPLEAEFEKMSN) form the RPE1 insert domain. S-adenosyl-L-methionine-binding residues include Gly-109, Asp-130, and Leu-172.

The protein belongs to the methyltransferase superfamily. UbiG/COQ3 family.

The catalysed reaction is a 3-demethylubiquinol + S-adenosyl-L-methionine = a ubiquinol + S-adenosyl-L-homocysteine + H(+). It catalyses the reaction a 3-(all-trans-polyprenyl)benzene-1,2-diol + S-adenosyl-L-methionine = a 2-methoxy-6-(all-trans-polyprenyl)phenol + S-adenosyl-L-homocysteine + H(+). The protein operates within cofactor biosynthesis; ubiquinone biosynthesis. Its function is as follows. O-methyltransferase that catalyzes the 2 O-methylation steps in the ubiquinone biosynthetic pathway. This is Ubiquinone biosynthesis O-methyltransferase from Rickettsia conorii (strain ATCC VR-613 / Malish 7).